Consider the following 130-residue polypeptide: Small ribosomal subunit protein uS8 (130 aa).

This sequence belongs to the universal ribosomal protein uS8 family. Part of the 30S ribosomal subunit. Contacts proteins S5 and S12.

In terms of biological role, one of the primary rRNA binding proteins, it binds directly to 16S rRNA central domain where it helps coordinate assembly of the platform of the 30S subunit. The protein is Small ribosomal subunit protein uS8 of Glaesserella parasuis serovar 5 (strain SH0165) (Haemophilus parasuis).